The sequence spans 309 residues: Prepilin leader peptidase/N-methyltransferase (309 aa).

Residues 35-55 (MQLAFAIVLGLVVGSFINVVV) form a helical membrane-spanning segment. Residues Cys-96, Cys-99, Cys-121, and Cys-124 each contribute to the Zn(2+) site. The next 6 helical transmembrane spans lie at 147–167 (LALF…AALL), 183–203 (LTLP…FASL), 207–227 (VIGA…FKLL), 230–250 (IEGI…WLGW), 253–273 (LPQV…VATW), and 288–308 (FLAA…LLLG).

It belongs to the peptidase A24 family. The cofactor is Zn(2+).

Its subcellular location is the cell inner membrane. The enzyme catalyses Typically cleaves a -Gly-|-Phe- bond to release an N-terminal, basic peptide of 5-8 residues from type IV prepilin, and then N-methylates the new N-terminal amino group, the methyl donor being S-adenosyl-L-methionine.. In terms of biological role, plays an essential role in type IV pili and type II pseudopili formation by proteolytically removing the leader sequence from substrate proteins and subsequently monomethylating the alpha-amino group of the newly exposed N-terminal phenylalanine. In Burkholderia pseudomallei (strain K96243), this protein is Prepilin leader peptidase/N-methyltransferase (gspO).